The following is a 146-amino-acid chain: Nucleoside diphosphate kinase (146 aa).

Residues K11, F59, R87, T93, R104, and N114 each coordinate ATP. The Pros-phosphohistidine intermediate role is filled by H117.

This sequence belongs to the NDK family. As to quaternary structure, homotetramer. Requires Mg(2+) as cofactor.

The protein resides in the cytoplasm. It catalyses the reaction a 2'-deoxyribonucleoside 5'-diphosphate + ATP = a 2'-deoxyribonucleoside 5'-triphosphate + ADP. It carries out the reaction a ribonucleoside 5'-diphosphate + ATP = a ribonucleoside 5'-triphosphate + ADP. Functionally, major role in the synthesis of nucleoside triphosphates other than ATP. The ATP gamma phosphate is transferred to the NDP beta phosphate via a ping-pong mechanism, using a phosphorylated active-site intermediate. The chain is Nucleoside diphosphate kinase from Anaplasma marginale (strain Florida).